The sequence spans 62 residues: Phycobilisome degradation protein NblA homolog 1 (62 aa).

To Synechococcus PCC 7942 NblA and some, to chloroplast ycf18.

This is Phycobilisome degradation protein NblA homolog 1 from Synechocystis sp. (strain ATCC 27184 / PCC 6803 / Kazusa).